The chain runs to 315 residues: L-lactate dehydrogenase (315 aa).

NAD(+)-binding residues include Val14, Asp35, and Tyr66. Residues Gln83, Arg89, and 121–124 (NPVD) each bind substrate. NAD(+) contacts are provided by residues 119–121 (VAN) and Ser144. Residue 149-152 (DTAR) coordinates substrate. The active-site Proton acceptor is His176. At Tyr221 the chain carries Phosphotyrosine. A substrate-binding site is contributed by Thr230.

Belongs to the LDH/MDH superfamily. LDH family. In terms of assembly, homotetramer.

It localises to the cytoplasm. It catalyses the reaction (S)-lactate + NAD(+) = pyruvate + NADH + H(+). The protein operates within fermentation; pyruvate fermentation to lactate; (S)-lactate from pyruvate: step 1/1. In terms of biological role, catalyzes the conversion of lactate to pyruvate. The sequence is that of L-lactate dehydrogenase from Mesomycoplasma hyopneumoniae (strain 232) (Mycoplasma hyopneumoniae).